The chain runs to 439 residues: Trehalose-phosphatase (439 aa).

Mg(2+)-binding residues include D163 and D165. The active-site Proton donor/acceptor is D165. 282-284 serves as a coordination point for substrate; the sequence is QRK. D373 is a Mg(2+) binding site.

Belongs to the gob-1 trehalose phosphatase family. Mg(2+) serves as cofactor. In terms of tissue distribution, ubiquitously expressed. Strong expression in intestine.

The enzyme catalyses alpha,alpha-trehalose 6-phosphate + H2O = alpha,alpha-trehalose + phosphate. In terms of biological role, catalyzes the hydrolysis of trehalose 6-phosphate to trehalose and phosphate; prevents the accumulation of toxic levels of trehalose 6-phosphate. The sequence is that of Trehalose-phosphatase from Caenorhabditis elegans.